The sequence spans 596 residues: Aspartate--tRNA(Asp/Asn) ligase (596 aa).

Glutamate 173 lines the L-aspartate pocket. Positions 197 to 200 (QLFK) are aspartate. Arginine 219 serves as a coordination point for L-aspartate. ATP-binding positions include 219 to 221 (RDE) and glutamine 228. Histidine 450 is an L-aspartate binding site. Position 485 (glutamate 485) interacts with ATP. Position 492 (arginine 492) interacts with L-aspartate. 537–540 (GLDR) lines the ATP pocket.

This sequence belongs to the class-II aminoacyl-tRNA synthetase family. Type 1 subfamily. In terms of assembly, homodimer.

The protein localises to the cytoplasm. It catalyses the reaction tRNA(Asx) + L-aspartate + ATP = L-aspartyl-tRNA(Asx) + AMP + diphosphate. In terms of biological role, aspartyl-tRNA synthetase with relaxed tRNA specificity since it is able to aspartylate not only its cognate tRNA(Asp) but also tRNA(Asn). Reaction proceeds in two steps: L-aspartate is first activated by ATP to form Asp-AMP and then transferred to the acceptor end of tRNA(Asp/Asn). This is Aspartate--tRNA(Asp/Asn) ligase from Hydrogenovibrio crunogenus (strain DSM 25203 / XCL-2) (Thiomicrospira crunogena).